A 78-amino-acid chain; its full sequence is Acyl carrier protein (78 aa).

Residues 2 to 77 (SNIEQQVKKI…LAIDYINAHN (76 aa)) enclose the Carrier domain. The residue at position 37 (Ser37) is an O-(pantetheine 4'-phosphoryl)serine.

Belongs to the acyl carrier protein (ACP) family. Post-translationally, 4'-phosphopantetheine is transferred from CoA to a specific serine of apo-ACP by AcpS. This modification is essential for activity because fatty acids are bound in thioester linkage to the sulfhydryl of the prosthetic group.

Its subcellular location is the cytoplasm. It functions in the pathway lipid metabolism; fatty acid biosynthesis. In terms of biological role, carrier of the growing fatty acid chain in fatty acid biosynthesis. This Neisseria gonorrhoeae (strain ATCC 700825 / FA 1090) protein is Acyl carrier protein.